Here is a 988-residue protein sequence, read N- to C-terminus: RecQ-like DNA helicase blm-1 (988 aa).

A disordered region spans residues 46–119 (CEEREEEYID…QFPSRPQKRL (74 aa)). A run of 2 repeats spans residues 121 to 129 (DPPIVDLDE) and 130 to 138 (EPPIVDLDD). The interval 121–138 (DPPIVDLDEEPPIVDLDD) is 2 X 9 AA tandem repeats of [DE]-P-P-I-V-D-L-D-[ED]. Residues 148–185 (TSEEVVSGDIAPEEEEEEGHDSFDDFESVPAQPPSKNT) form a disordered region. Positions 158 to 174 (APEEEEEEGHDSFDDFE) are enriched in acidic residues. ATP-binding positions include 248–252 (FRHRQ) and 272–276 (GAGKS). The region spanning 256 to 433 (ILSTLMGHDT…RDHLKMQNSK (178 aa)) is the Helicase ATP-binding domain. A DEAH box motif is present at residues 375–378 (DEAH). The Helicase C-terminal domain maps to 458-603 (NVVEKMKQLY…VRSMHLNNVL (146 aa)). Positions 478-480 (SRK) are 3' overhang DNA-binding. An ATP-binding site is contributed by R562. Residues 580–583 (RLRR) form a 3' overhang DNA-binding region. Zn(2+) contacts are provided by C615, C633, C640, and C643. 3' overhang DNA-binding regions lie at residues 676–678 (TLK), 687–691 (ALIKK), and 736–742 (YSVPNQA). The HRDC domain occupies 807-888 (GDVFTRCLQD…ATYWKQVDER (82 aa)). The tract at residues 930-988 (GGGGCRGRGKKRAFSGFSSGRATKKPRATAPSARGKTSGRGGAKPATSLKRNMYPATSM) is disordered. The short motif at 939-955 (KKRAFSGFSSGRATKKP) is the Nuclear localization signal element.

This sequence belongs to the helicase family. RecQ subfamily. As to quaternary structure, monomer. Homodimer (via N-terminus). Homotetramer (via N-terminus); dimer of dimers. Homohexamer (via N-terminus). Self-association negatively regulates DNA unwinding amplitude and rate. Oligomer forms dissociate into monomer in presence of ATP. Component of the BTR double Holliday Junction dissolution complex composed of at least him-6, top-3, rmh-1 and rmif-2, which is involved in double strand break repair in the germline. May interact with rmh-1; the interaction is required for mutual stability and localization at nuclear foci. Forms a complex composed of cdc-48.1, him-6 and crp-1; within the complex, interacts with cdc-48.1. The cofactor is Zn(2+).

Its subcellular location is the nucleus. The protein resides in the chromosome. The catalysed reaction is Couples ATP hydrolysis with the unwinding of duplex DNA by translocating in the 3'-5' direction.. The enzyme catalyses ATP + H2O = ADP + phosphate + H(+). Its function is as follows. Component of the BTR double Holliday Junction dissolution complex, which is involved in homologous recombination during meiotic double strand break in the germline. Stabilizes and positively regulates the localization of the BTR double Holliday Junction dissolution complex component rmh-1 at nuclear foci during meiotic recombination. Participates in DNA replication and repair. Exhibits a magnesium-dependent ATP-dependent DNA-helicase activity that unwinds single- and double-stranded DNA in a 3'-5' direction. Negatively regulates sister chromatid exchange (SCE). ATP-dependent DNA helicase that unwinds single- and double-stranded DNA in a 3'-5' direction. Participates in DNA replication and repair. Negatively regulates sister chromatid exchange (SCE). Stimulates DNA 4-way junction branch migration and DNA Holliday junction dissolution. Binds single-stranded DNA (ssDNA), forked duplex DNA and DNA Holliday junction. The sequence is that of RecQ-like DNA helicase blm-1 from Caenorhabditis elegans.